The sequence spans 469 residues: Cytochrome c biogenesis protein CcsB (469 aa).

The next 3 helical transmembrane spans lie at 30–50 (LRLAIGLLLAIAVLSATGTVI), 89–109 (TPWFLAILILFGSSLAACSLT), and 175–195 (IGPILVHVSMLLILLGAIWGS).

Belongs to the Ccs1/CcsB family. May interact with CcsA.

Its subcellular location is the cellular thylakoid membrane. In terms of biological role, required during biogenesis of c-type cytochromes (cytochrome c6 and cytochrome f) at the step of heme attachment. This Synechococcus sp. (strain JA-2-3B'a(2-13)) (Cyanobacteria bacterium Yellowstone B-Prime) protein is Cytochrome c biogenesis protein CcsB.